Consider the following 537-residue polypeptide: Glucocorticoid-induced transcript 1 protein (537 aa).

Disordered stretches follow at residues 1–45 (MSTA…APAA) and 62–254 (LLRG…HGNH). Serine 69, serine 96, serine 98, and serine 99 each carry phosphoserine. A compositionally biased stretch (low complexity) spans 69-86 (SPTRPAAAATAAAALGSL). The span at 97–106 (PSSPTPPPAA) shows a compositional bias: pro residues. Threonine 101 carries the post-translational modification Phosphothreonine. Positions 121–136 (RSPESRRRSSSPERRS) are enriched in basic and acidic residues. A compositionally biased stretch (low complexity) spans 152-168 (IRTSSTIRRTSSLDTIT). Residues serine 162 and serine 163 each carry the phosphoserine modification. 2 positions are modified to phosphothreonine: threonine 166 and threonine 168. Over residues 178 to 192 (RDPHVHYPSCMRDKA) the composition is skewed to basic and acidic residues. Serine 214 is subject to Phosphoserine. The stretch at 217-244 (SADQLKEIAKLRQQLQRSKQSSRHSKEK) forms a coiled coil. The residue at position 248 (serine 248) is a Phosphoserine. The residue at position 256 (threonine 256) is a Phosphothreonine. A Phosphoserine modification is found at serine 293. Over residues 309–321 (EVSKPLDIPDGRR) the composition is skewed to basic and acidic residues. The interval 309-407 (EVSKPLDIPD…KPNNSYMFKR (99 aa)) is disordered. A compositionally biased stretch (polar residues) spans 329–346 (RSSSTRSIDTQTPSVQER). Position 333 is a phosphothreonine (threonine 333). Position 335 is a phosphoserine (serine 335). Threonine 340 carries the post-translational modification Phosphothreonine. A compositionally biased stretch (low complexity) spans 347–359 (SSSCSSHSPCVSP). Serine 384, serine 388, serine 396, serine 402, and serine 470 each carry phosphoserine. Residues 495-520 (SLSDDTSTADSLEPSAQQPSQQQQLL) form a disordered region.

As to expression, predominantly expressed in thymus and testis, especially in CD4+CD8+ cells and at specific stages of spermatogenesis.

The sequence is that of Glucocorticoid-induced transcript 1 protein (Glcci1) from Mus musculus (Mouse).